We begin with the raw amino-acid sequence, 427 residues long: Citrate synthase (427 aa).

An N6-acetyllysine modification is found at Lys-283. Residues His-306 and Asp-363 contribute to the active site.

The protein belongs to the citrate synthase family. Homohexamer.

It catalyses the reaction oxaloacetate + acetyl-CoA + H2O = citrate + CoA + H(+). Its pathway is carbohydrate metabolism; tricarboxylic acid cycle; isocitrate from oxaloacetate: step 1/2. This is Citrate synthase (gltA) from Escherichia coli O6:H1 (strain CFT073 / ATCC 700928 / UPEC).